Consider the following 217-residue polypeptide: Peptide deformylase (217 aa).

Residues C91 and H133 each contribute to the Fe cation site. E134 is a catalytic residue. A Fe cation-binding site is contributed by H137. Residues 153 to 217 are disordered; sequence VSEDGEEEEE…RRGSAAAKEE (65 aa). Residues 155–176 are compositionally biased toward acidic residues; the sequence is EDGEEEEEAEVAEVMPEPEAEG. Residues 177–192 show a composition bias toward low complexity; the sequence is AGEPSAEGAGQAAAEA. Over residues 206–217 the composition is skewed to basic and acidic residues; it reads GERRGSAAAKEE.

It belongs to the polypeptide deformylase family. Requires Fe(2+) as cofactor.

The catalysed reaction is N-terminal N-formyl-L-methionyl-[peptide] + H2O = N-terminal L-methionyl-[peptide] + formate. Functionally, removes the formyl group from the N-terminal Met of newly synthesized proteins. Requires at least a dipeptide for an efficient rate of reaction. N-terminal L-methionine is a prerequisite for activity but the enzyme has broad specificity at other positions. The sequence is that of Peptide deformylase from Symbiobacterium thermophilum (strain DSM 24528 / JCM 14929 / IAM 14863 / T).